Consider the following 313-residue polypeptide: Cyclin-dependent kinase B2-1 (313 aa).

N-acetylmethionine is present on M1. The region spanning 14-304 (FEKLEKVGEG…AKMAMEHPYF (291 aa)) is the Protein kinase domain. Residues 20–28 (VGEGTYGKV) and K43 contribute to the ATP site. Position 25 is a phosphotyrosine (Y25). The active-site Proton acceptor is D145. T179 carries the phosphothreonine modification.

It belongs to the protein kinase superfamily. CMGC Ser/Thr protein kinase family. CDC2/CDKX subfamily. As to quaternary structure, interacts with CYCD4-1 and CKS1. As to expression, expressed in root tips, shoot apical meristem, leaf primordia vascular tissues and tapetum of anthers.

The catalysed reaction is L-seryl-[protein] + ATP = O-phospho-L-seryl-[protein] + ADP + H(+). It catalyses the reaction L-threonyl-[protein] + ATP = O-phospho-L-threonyl-[protein] + ADP + H(+). It carries out the reaction [DNA-directed RNA polymerase] + ATP = phospho-[DNA-directed RNA polymerase] + ADP + H(+). The chain is Cyclin-dependent kinase B2-1 (CDKB2-1) from Arabidopsis thaliana (Mouse-ear cress).